The sequence spans 341 residues: Platelet-activating factor receptor (341 aa).

Topologically, residues methionine 1–threonine 16 are extracellular. Asparagine 4 is a glycosylation site (N-linked (GlcNAc...) asparagine). Residues leucine 17–tryptophan 38 traverse the membrane as a helical segment. The Cytoplasmic segment spans residues valine 39–isoleucine 54. The chain crosses the membrane as a helical span at residues phenylalanine 55 to isoleucine 74. Residues valine 75 to asparagine 91 are Extracellular-facing. An intrachain disulfide couples cysteine 90 to cysteine 173. The chain crosses the membrane as a helical span at residues leucine 92–tyrosine 113. The Cytoplasmic portion of the chain corresponds to asparagine 114–arginine 133. A helical membrane pass occupies residues glycine 134–threonine 155. The Extracellular segment spans residues aspartate 156–isoleucine 184. Asparagine 169 carries N-linked (GlcNAc...) asparagine glycosylation. Residues leucine 185–cysteine 205 traverse the membrane as a helical segment. The Cytoplasmic portion of the chain corresponds to asparagine 206–methionine 233. A helical membrane pass occupies residues valine 234–proline 254. Over tryptophan 255–glutamine 275 the chain is Extracellular. Residues isoleucine 276–leucine 295 form a helical membrane-spanning segment. Residues threonine 296–asparagine 341 lie on the Cytoplasmic side of the membrane.

The protein belongs to the G-protein coupled receptor 1 family. As to quaternary structure, interacts with ARRB1. In terms of tissue distribution, present in almost all organs including spleen, small intestine, kidney, lung, liver and brain.

The protein localises to the cell membrane. Functionally, receptor for platelet activating factor, a chemotactic phospholipid mediator that possesses potent inflammatory, smooth-muscle contractile and hypotensive activity. Seems to mediate its action via a G protein that activates a phosphatidylinositol-calcium second messenger system. The polypeptide is Platelet-activating factor receptor (Ptafr) (Rattus norvegicus (Rat)).